Consider the following 265-residue polypeptide: Mlc titration factor A (265 aa).

Zn(2+) is bound by residues His111, His148, His152, and Glu211.

It belongs to the MtfA family. Interacts with Mlc. It depends on Zn(2+) as a cofactor.

The protein localises to the cytoplasm. Involved in the modulation of the activity of the glucose-phosphotransferase system (glucose-PTS). Interacts with the transcriptional repressor Mlc, preventing its interaction with DNA and leading to the modulation of expression of genes regulated by Mlc, including ptsG, which encodes the PTS system glucose-specific EIICB component. In terms of biological role, shows zinc-dependent metallopeptidase activity. The protein is Mlc titration factor A of Cronobacter sakazakii (strain ATCC BAA-894) (Enterobacter sakazakii).